The chain runs to 283 residues: MPMKPLDGETTSTEKLSPVLRPTVLIFDSGVGGLSVYNEIRTLLPDLHYLYAFDNVAFPYGEKSEAFIVERVLDIVTAVTGLYPLALVVIACNSASTVTLPALRARFAFPVVGVVPAIKPAARLTRNGIVGLLATRGTVKRPYTHELVARFAGECKTEMLGSGELVDIAEAKLHGQPVAIEEVRRILQPWLRMAEPPDTVVLGCTHFPLISEELQQVLPQGTRLIDSGAAIARRTVWLLENESPEVLSADDNMALCLEITEQTVQLIPVLQRYGFKTLKKLAL.

Substrate-binding positions include 28 to 29 and 60 to 61; these read DS and YG. The active-site Proton donor/acceptor is the C92. 93 to 94 serves as a coordination point for substrate; that stretch reads NS. The Proton donor/acceptor role is filled by C204. 205 to 206 lines the substrate pocket; the sequence is TH.

It belongs to the aspartate/glutamate racemases family.

The enzyme catalyses L-glutamate = D-glutamate. It functions in the pathway cell wall biogenesis; peptidoglycan biosynthesis. Functionally, provides the (R)-glutamate required for cell wall biosynthesis. The polypeptide is Glutamate racemase (Erwinia tasmaniensis (strain DSM 17950 / CFBP 7177 / CIP 109463 / NCPPB 4357 / Et1/99)).